A 328-amino-acid chain; its full sequence is GMP reductase (328 aa).

The Thioimidate intermediate role is filled by Cys-176. 205–228 is a binding site for NADP(+); that stretch reads IIADGGIRTHGDIAKSVRFGATMV.

It belongs to the IMPDH/GMPR family. GuaC type 2 subfamily.

It catalyses the reaction IMP + NH4(+) + NADP(+) = GMP + NADPH + 2 H(+). Its function is as follows. Catalyzes the irreversible NADPH-dependent deamination of GMP to IMP. It functions in the conversion of nucleobase, nucleoside and nucleotide derivatives of G to A nucleotides, and in maintaining the intracellular balance of A and G nucleotides. The protein is GMP reductase of Shouchella clausii (strain KSM-K16) (Alkalihalobacillus clausii).